Reading from the N-terminus, the 229-residue chain is Heptaprenylglyceryl phosphate synthase (229 aa).

Lys-12 contributes to the sn-glycerol 1-phosphate binding site. Asp-14 and Ser-40 together coordinate Mg(2+). Sn-glycerol 1-phosphate is bound by residues 159–164, Gly-189, and 209–210; these read YLEYSG and GN.

This sequence belongs to the GGGP/HepGP synthase family. Group I subfamily. Homodimer. Requires Mg(2+) as cofactor.

It catalyses the reaction sn-glycerol 1-phosphate + all-trans-heptaprenyl diphosphate = 3-heptaprenyl-sn-glycero-1-phosphate + diphosphate. The protein operates within membrane lipid metabolism; glycerophospholipid metabolism. Its function is as follows. Prenyltransferase that catalyzes in vivo the transfer of the heptaprenyl moiety of heptaprenyl pyrophosphate (HepPP; 35 carbon atoms) to the C3 hydroxyl of sn-glycerol-1-phosphate (G1P), producing heptaprenylglyceryl phosphate (HepGP). This reaction is an ether-bond-formation step in the biosynthesis of archaea-type G1P-based membrane lipids found in Bacillales. In Bacillus thuringiensis (strain Al Hakam), this protein is Heptaprenylglyceryl phosphate synthase.